Here is a 235-residue protein sequence, read N- to C-terminus: Eukaryotic translation initiation factor 4E-1 (235 aa).

The span at 1–16 (MAVEDTPKSVVTEEAK) shows a compositional bias: basic and acidic residues. The segment at 1-59 (MAVEDTPKSVVTEEAKPNSIENPIDRYHEEGDDAEEGEIAGGEGDGNVDESSKSGVPES) is disordered. EIF4G-binding regions lie at residues 60 to 63 (HPLE) and 70 to 106 (FDNP…NNMK). MRNA contacts are provided by residues 78–83 (KQTSWG), Lys-110, and 128–129 (WE). Cys-133 and Cys-171 form a disulfide bridge. An EIF4G-binding region spans residues 154–163 (YTLLALIGEQ). MRNA is bound by residues 178–183 (RGKQER) and 223–227 (KKLDR).

The protein belongs to the eukaryotic initiation factor 4E family. In terms of assembly, EIF4F is a multi-subunit complex, the composition of which varies with external and internal environmental conditions. It is composed of at least EIF4A, EIF4E and EIF4G. EIF4E is also known to interact with other partners. In higher plants two isoforms of EIF4F have been identified, named isoform EIF4F and isoform EIF(iso)4F. Isoform EIF4F has subunits p220 and p26, whereas isoform EIF(iso)4F has subunits p82 and p28. Interacts directly with EXA1. As to quaternary structure, (Microbial infection) Interacts with viral genome-linked protein (VPg); this interaction is possible in susceptible hosts but impaired in resistant plants. In terms of processing, according to the redox status, the Cys-133-Cys-171 disulfide bridge may have a role in regulating protein function by affecting its ability to bind capped mRNA. In terms of tissue distribution, expressed in all tissues except in the cells of the specialization zone of the roots.

It localises to the nucleus. Its subcellular location is the cytoplasm. Its function is as follows. Component of the protein complex eIF4F, which is involved in the recognition of the mRNA cap, ATP-dependent unwinding of 5'-terminal secondary structure and recruitment of mRNA to the ribosome. Recognizes and binds the 7-methylguanosine-containing mRNA cap during an early step in the initiation of protein synthesis and facilitates ribosome binding by inducing the unwinding of the mRNAs secondary structures. Key component of recessive resistance to potyviruses. Functionally, (Microbial infection) Susceptibility host factor required for viral infection by recruiting viral RNAs to the host ribosomal complex via an interaction with viral genome-linked protein (VPg). The protein is Eukaryotic translation initiation factor 4E-1 of Arabidopsis thaliana (Mouse-ear cress).